A 971-amino-acid chain; its full sequence is Protein ALWAYS EARLY 1 (971 aa).

Over residues 1–11 (MAPTRKSKSVN) the composition is skewed to basic residues. 5 disordered regions span residues 1 to 40 (MAPT…LADK), 117 to 137 (SESE…LKRK), 197 to 260 (IEDF…MFEN), 326 to 371 (GLLE…GLED), and 421 to 507 (PKES…KISL). An SANT domain is found at 40–98 (KLGPQWTKRELVRFYDAYRKYVGDWKKVAAAVRNNRSVEMVETLFCMNRAYLSLPEGTA). 3 stretches are compositionally biased toward basic and acidic residues: residues 209-219 (KQLDADDDASR), 332-350 (SSPH…KKSN), and 424-440 (STQD…EVDS). Residues 450–470 (SSQGPAKQLKTAKTTVESSSA) are compositionally biased toward polar residues.

Expressed ubiquitously in vegetative and reproductive tissues.

The protein resides in the nucleus. This chain is Protein ALWAYS EARLY 1 (ALY1), found in Arabidopsis thaliana (Mouse-ear cress).